Here is a 339-residue protein sequence, read N- to C-terminus: Annexin A2 (339 aa).

Serine 2 is modified (N-acetylserine). Positions 2 to 24 (STVHEILCKLSLEGDHSTPPSAY) are S100A10-binding site. The residue at position 24 (tyrosine 24) is a Phosphotyrosine; by SRC. A Phosphoserine; by PKC modification is found at serine 26. Annexin repeat units lie at residues 33–104 (FDAE…GLLK) and 105–176 (TPAQ…ALAK). Lysine 49 bears the N6-acetyllysine; alternate mark. Lysine 49 participates in a covalent cross-link: Glycyl lysine isopeptide (Lys-Gly) (interchain with G-Cter in SUMO1); alternate. Residue lysine 49 forms a Glycyl lysine isopeptide (Lys-Gly) (interchain with G-Cter in SUMO2); alternate linkage. The residue at position 152 (lysine 152) is an N6-acetyllysine. Serine 184 carries the post-translational modification Phosphoserine. Annexin repeat units lie at residues 189–261 (ELID…NLVQ) and 265–336 (NKPL…YLCG). Tyrosine 199 carries the phosphotyrosine modification. The residue at position 227 (lysine 227) is an N6-acetyllysine.

This sequence belongs to the annexin family. In terms of assembly, heterotetramer containing 2 light chains of S100A10/p11 and 2 heavy chains of ANXA2/p36. Interacts with ATP1B1. Interacts with DYSF. Interacts with COCH. Interacts (via repeat Annexin 1) with PCSK9 (via the C-terminal domain); the interaction inhibits the degradation of LDLR. Interacts with CEACAM1 (via the cytoplasmic domain); this interaction is regulated by phosphorylation of CEACAM1. Interacts with APPL2 and APPL1; targets APPL2 to endosomes and acting in parallel to RAB5A. Interacts with S100A4. May interact with UBAP2. Interacts with PLEKHG4B; this interaction is required for PLEKHG4B localization to cell-cell adhesions. In terms of processing, ISGylated.

The protein localises to the secreted. It localises to the extracellular space. Its subcellular location is the extracellular matrix. It is found in the basement membrane. The protein resides in the melanosome. Its function is as follows. Calcium-regulated membrane-binding protein whose affinity for calcium is greatly enhanced by anionic phospholipids. It binds two calcium ions with high affinity. May be involved in heat-stress response. Inhibits PCSK9-enhanced LDLR degradation, probably reduces PCSK9 protein levels via a translational mechanism but also competes with LDLR for binding with PCSK9. Binds to endosomes damaged by phagocytosis of particulate wear debris and participates in endosomal membrane stabilization, thereby limiting NLRP3 inflammasome activation. Required for endothelial cell surface plasmin generation and may support fibrinolytic surveillance and neoangiogenesis. The protein is Annexin A2 (ANXA2) of Bos taurus (Bovine).